We begin with the raw amino-acid sequence, 336 residues long: Dihydroorotate dehydrogenase (quinone) (336 aa).

Residues 62 to 66 and Thr86 contribute to the FMN site; that span reads AGLEK. Lys66 is a binding site for substrate. 111–115 contacts substrate; sequence NRMGF. FMN-binding residues include Asn139 and Asn172. Substrate is bound at residue Asn172. Ser175 serves as the catalytic Nucleophile. Residue Asn177 coordinates substrate. 2 residues coordinate FMN: Lys217 and Thr245. 246–247 is a substrate binding site; it reads NT. FMN is bound by residues Gly268, Gly297, and 318–319; that span reads YS.

This sequence belongs to the dihydroorotate dehydrogenase family. Type 2 subfamily. In terms of assembly, monomer. FMN serves as cofactor.

Its subcellular location is the cell membrane. It carries out the reaction (S)-dihydroorotate + a quinone = orotate + a quinol. The protein operates within pyrimidine metabolism; UMP biosynthesis via de novo pathway; orotate from (S)-dihydroorotate (quinone route): step 1/1. Functionally, catalyzes the conversion of dihydroorotate to orotate with quinone as electron acceptor. The chain is Dihydroorotate dehydrogenase (quinone) from Aliivibrio salmonicida (strain LFI1238) (Vibrio salmonicida (strain LFI1238)).